Consider the following 54-residue polypeptide: Potassium channel toxin alpha-KTx 14.x (54 aa).

The N-terminal stretch at 1–23 (MKIFFAILLILAVCSMAIWTVNG) is a signal peptide. Disulfide bonds link C30–C46, C36–C51, and C40–C53.

It belongs to the short scorpion toxin superfamily. Potassium channel inhibitor family. Alpha-KTx 14 subfamily. As to expression, expressed by the venom gland.

The protein localises to the secreted. Functionally, potassium channels inhibitor. In Olivierus martensii (Manchurian scorpion), this protein is Potassium channel toxin alpha-KTx 14.x.